Here is a 191-residue protein sequence, read N- to C-terminus: Pyridoxal 5'-phosphate synthase subunit PdxT (191 aa).

Residue 46–48 (GES) coordinates L-glutamine. The active-site Nucleophile is the Cys78. L-glutamine contacts are provided by residues Arg105 and 134–135 (IR). Active-site charge relay system residues include His170 and Glu172.

The protein belongs to the glutaminase PdxT/SNO family. In terms of assembly, in the presence of PdxS, forms a dodecamer of heterodimers. Only shows activity in the heterodimer.

It catalyses the reaction aldehydo-D-ribose 5-phosphate + D-glyceraldehyde 3-phosphate + L-glutamine = pyridoxal 5'-phosphate + L-glutamate + phosphate + 3 H2O + H(+). It carries out the reaction L-glutamine + H2O = L-glutamate + NH4(+). Its pathway is cofactor biosynthesis; pyridoxal 5'-phosphate biosynthesis. Catalyzes the hydrolysis of glutamine to glutamate and ammonia as part of the biosynthesis of pyridoxal 5'-phosphate. The resulting ammonia molecule is channeled to the active site of PdxS. In Carboxydothermus hydrogenoformans (strain ATCC BAA-161 / DSM 6008 / Z-2901), this protein is Pyridoxal 5'-phosphate synthase subunit PdxT.